The primary structure comprises 94 residues: UPF0768 protein YBL029C-A (94 aa).

It belongs to the UPF0768 family.

Its subcellular location is the cell membrane. In Saccharomyces cerevisiae (strain ATCC 204508 / S288c) (Baker's yeast), this protein is UPF0768 protein YBL029C-A.